A 2472-amino-acid chain; its full sequence is Nuclear receptor corepressor 2 (2472 aa).

Disordered stretches follow at residues 1–20 (MSGS…PRYP), 47–168 (RDYT…SRLS), and 190–220 (ISKL…PPIE). At R18 the chain carries Asymmetric dimethylarginine. The segment covering 51 to 60 (SHLSPGSIIQ) has biased composition (polar residues). Residues S54 and S67 each carry the phosphoserine modification. 2 stretches are compositionally biased toward basic and acidic residues: residues 78–88 (RSQELHLRPES) and 96–112 (GKPD…RLEL). A phosphoserine mark is found at S149 and S152. Residues 165–207 (SRLSKEELIQNMDRVDREITMVEQQISKLKKKQQQLEEEAAKP) adopt a coiled-coil conformation. Basic and acidic residues predominate over residues 203 to 212 (EAAKPPEPEK). S215 carries the post-translational modification Phosphoserine. The interaction with SIN3A/B stretch occupies residues 254 to 312 (LPLYNQPSDTRQYHENIKINQAMRKKLILYFKRRNHARKQWEQRFCQRYDQLMEAWEKK). The tract at residues 389–480 (MRQLAVIPPM…YLTKKNENYK (92 aa)) is deacetylase activation domain (DAD). Residues 427 to 478 (QVTNMWSEQERDTFREKFMQHPKNFGLIASFLERKTVAECVLYYYLTKKNEN) enclose the SANT 1 domain. Residues K449, Y470, and Y471 each coordinate 1D-myo-inositol 1,4,5,6-tetrakisphosphate. Disordered stretches follow at residues 487–618 (YRRR…EMET), 665–1107 (HKLK…RPPI), and 1173–1197 (SATS…YRGS). Residues 492 to 560 (KSQQQQQQQQ…GEDNDEKEAV (69 aa)) adopt a coiled-coil conformation. The residue at position 493 (S493) is a Phosphoserine. Residues 494-507 (QQQQQQQQQQQQQQ) are compositionally biased toward low complexity. The span at 512–548 (SQEEKEEKEKEKEADKEEEKQDAENEKEELSKEKTDD) shows a compositional bias: basic and acidic residues. T549 bears the Phosphothreonine mark. S550 carries the phosphoserine modification. A compositionally biased stretch (polar residues) spans 592-609 (ATPQQSSELASMEMNESS). The 52-residue stretch at 606–657 (NESSRWTEEEMETAKKGLLEHGRNWSAIARMVGSKTVSQCKNFYFNYKKRQN) folds into the SANT 2 domain. The stretch at 658–682 (LDEILQQHKLKMEKERNARRKKKKT) forms a coiled coil. The span at 709-718 (NEEELAEEAE) shows a compositional bias: acidic residues. Residues 739–750 (VNNSSDTESVPS) are compositionally biased toward polar residues. Residues S747 and S750 each carry the phosphoserine modification. Pro residues-rich tracts occupy residues 773 to 782 (TQPPVPPPEE) and 789 to 811 (EPSP…PAAP). Basic and acidic residues-rich tracts occupy residues 831 to 850 (EDAK…KPEE) and 859 to 868 (ESVKSDHKEE). K878 carries the post-translational modification N6-acetyllysine. The segment covering 905-919 (GSSSGATQDSDSSAT) has biased composition (low complexity). The residue at position 938 (S938) is a Phosphoserine. Phosphothreonine is present on T945. S955 is modified (phosphoserine). The residue at position 958 (K958) is an N6-acetyllysine. Residues 978–988 (KVHEPPREDTV) show a composition bias toward basic and acidic residues. A compositionally biased stretch (pro residues) spans 989 to 1000 (PPKPVPPVPPPT). A compositionally biased stretch (low complexity) spans 1090–1101 (LPLGLHDSARPV). N6-acetyllysine occurs at positions 1181 and 1209. Residue S1220 is modified to Phosphoserine. 3 disordered regions span residues 1254-1277 (SVSQ…AAPK), 1345-1378 (LKRE…LKLK), and 1410-1443 (PLAP…KHDV). At T1350 the chain carries Phosphothreonine. Basic and acidic residues predominate over residues 1359-1368 (DLTETYKPRP). Phosphoserine occurs at positions 1449, 1509, and 1565. The tract at residues 1479-1578 (KSRSGTSSGA…TVPEHHPHPI (100 aa)) is disordered. Position 1624 is an asymmetric dimethylarginine (R1624). The segment at 1734–1826 (TAPPPFSSRH…PISPRTQDAL (93 aa)) is disordered. A compositionally biased stretch (low complexity) spans 1740 to 1753 (SSRHSSSPLSPGGP). Residues S1746 and S1749 each carry the phosphoserine modification. The span at 1765 to 1778 (SERERERERERDKS) shows a compositional bias: basic and acidic residues. The span at 1807-1826 (RPASHTHQHSPISPRTQDAL) shows a compositional bias: polar residues. Position 1819 is a phosphoserine (S1819). R1854 is subject to Omega-N-methylarginine. Disordered regions lie at residues 1857–1878 (RSTS…THCP), 1898–1986 (KETS…KPFS), and 2001–2078 (AGYS…LQTA). The span at 1899-1913 (ETSRVARPERPRVDA) shows a compositional bias: basic and acidic residues. K1920 is subject to N6-acetyllysine. Low complexity predominate over residues 1925–1938 (EPASSPSKSSEPRS). S1963 bears the Phosphoserine mark. K1983 carries the post-translational modification N6-acetyllysine. S2004, S2012, S2015, S2016, and S2018 each carry phosphoserine. Residue T2020 is modified to Phosphothreonine. Positions 2020–2043 (THDKGLSKPLEELEKSHLEGELRH) are enriched in basic and acidic residues. S2035 is subject to Phosphoserine. The segment covering 2064–2075 (LPESQPSSSPLL) has biased composition (low complexity). Positions 2086 to 2090 (RVVTL) are required for interaction with RARA in the absence of its ligand. A CORNR box of ID1 motif is present at residues 2094–2098 (ISEVI). The disordered stretch occupies residues 2132 to 2226 (RRPPSDLYLP…GNTSQPPAFF (95 aa)). S2161, S2181, and S2215 each carry phosphoserine. Positions 2296 to 2300 (LEAII) match the CORNR box of ID2 motif. The tract at residues 2343–2459 (GRSDHALTSP…HHAWDEEPKP (117 aa)) is disordered. S2371 is subject to Phosphoserine. The span at 2439-2450 (LAAGSGPLAGPH) shows a compositional bias: low complexity.

This sequence belongs to the N-CoR nuclear receptor corepressors family. As to quaternary structure, forms a large corepressor complex that contains SIN3A/B and histone deacetylases HDAC1 and HDAC2. This complex associates with the thyroid (TR) and the retinoid acid receptors (RAR) in the absence of ligand, and may stabilize their interaction with TFIIB. Interacts directly with RARA in the absence of ligand; the interaction represses RARA activity. Interacts (isoform SMRT) with HDAC10. Interacts with MINT. Component of the N-Cor repressor complex, at least composed of NCOR1, NCOR2, HDAC3, TBL1X, TBL1R, CORO2A and GPS2. Interacts with CBFA2T3 and ATXN1L. Interacts with RARB; the interaction is weak and does not repress RARB transactivational activity. Interacts (via 1D-myo-inositol 1,4,5,6-tetrakisphosphate) with HDAC3; promoting the histone deacetylase activity of HDAC3. Interacts with HDAC7 and C1D. Interacts with NR4A2; this interaction increases in the absence of PITX3. Interacts with BCL6 (via the BTB domain), required for BCL6 transcriptional repressor activity on a subset of target genes. Forms ternary complexes with BCOR and BCL6 on target gene promoters but, on enhancer elements, interacts with BCL6 and HDAC3 to repress proximal gene expression. May interact with DEAF1. Interacts with RXRA. Interacts with MECP2. Interacts with ZBTB7A. Interacts with AR. Interacts with TBL1Y. Interacts with SANBR (via the BTB domain). Ubiquitous. Also widely expressed in early embryos.

The protein resides in the nucleus. Functionally, transcriptional corepressor that mediates the transcriptional repression activity of some nuclear receptors by promoting chromatin condensation, thus preventing access of the basal transcription. Acts by recruiting chromatin modifiers, such as histone deacetylases HDAC1, HDAC2 and HDAC3. Required to activate the histone deacetylase activity of HDAC3. Involved in the regulation BCL6-dependent of the germinal center (GC) reactions, mainly through the control of the GC B-cells proliferation and survival. Recruited by ZBTB7A to the androgen response elements/ARE on target genes, negatively regulates androgen receptor signaling and androgen-induced cell proliferation. The protein is Nuclear receptor corepressor 2 (Ncor2) of Mus musculus (Mouse).